Reading from the N-terminus, the 388-residue chain is Deoxyuridine 5'-triphosphate nucleotidohydrolase (388 aa).

The span at 77-88 (EEKYDKEQHPGE) shows a compositional bias: basic and acidic residues. Disordered regions lie at residues 77–96 (EEKYDKEQHPGEDEASSPLP) and 336–388 (THTP…PRHP). The span at 351-363 (VDDDVDETEEDEK) shows a compositional bias: acidic residues.

It belongs to the dUTPase family. The cofactor is Mg(2+).

The catalysed reaction is dUTP + H2O = dUMP + diphosphate + H(+). It functions in the pathway pyrimidine metabolism; dUMP biosynthesis; dUMP from dCTP (dUTP route): step 2/2. In terms of biological role, involved in nucleotide metabolism: produces dUMP, the immediate precursor of thymidine nucleotides and decreases the intracellular concentration of dUTP to avoid uracil incorporation into viral DNA. The protein is Deoxyuridine 5'-triphosphate nucleotidohydrolase of Homo sapiens (Human).